A 355-amino-acid polypeptide reads, in one-letter code: UDP-N-acetylglucosamine--N-acetylmuramyl-(pentapeptide) pyrophosphoryl-undecaprenol N-acetylglucosamine transferase (355 aa).

UDP-N-acetyl-alpha-D-glucosamine contacts are provided by residues 13–15 (TGG), N125, R162, S190, I244, and Q289.

This sequence belongs to the glycosyltransferase 28 family. MurG subfamily.

It localises to the cell inner membrane. It carries out the reaction di-trans,octa-cis-undecaprenyl diphospho-N-acetyl-alpha-D-muramoyl-L-alanyl-D-glutamyl-meso-2,6-diaminopimeloyl-D-alanyl-D-alanine + UDP-N-acetyl-alpha-D-glucosamine = di-trans,octa-cis-undecaprenyl diphospho-[N-acetyl-alpha-D-glucosaminyl-(1-&gt;4)]-N-acetyl-alpha-D-muramoyl-L-alanyl-D-glutamyl-meso-2,6-diaminopimeloyl-D-alanyl-D-alanine + UDP + H(+). It functions in the pathway cell wall biogenesis; peptidoglycan biosynthesis. Its function is as follows. Cell wall formation. Catalyzes the transfer of a GlcNAc subunit on undecaprenyl-pyrophosphoryl-MurNAc-pentapeptide (lipid intermediate I) to form undecaprenyl-pyrophosphoryl-MurNAc-(pentapeptide)GlcNAc (lipid intermediate II). The chain is UDP-N-acetylglucosamine--N-acetylmuramyl-(pentapeptide) pyrophosphoryl-undecaprenol N-acetylglucosamine transferase from Neisseria meningitidis serogroup C (strain 053442).